Reading from the N-terminus, the 499-residue chain is Calcium/calmodulin-dependent protein kinase type II subunit delta (499 aa).

Ala2 carries the post-translational modification N-acetylalanine. The Protein kinase domain occupies 14–272 (YQLFEELGKG…ASEALKHPWI (259 aa)). ATP-binding positions include 20 to 28 (LGKGAFSVV) and Lys43. The active-site Proton acceptor is the Asp136. Residues 283–292 (HRQETVDCLK) are autoinhibitory domain. At Thr287 the chain carries Phosphothreonine; by autocatalysis. Residues 291–301 (LKKFNARRKLK) form a calmodulin-binding region. Phosphothreonine; by autocatalysis is present on residues Thr306 and Thr307. Phosphoserine is present on Ser315. Lys318 carries the post-translational modification N6-acetyllysine. A phosphoserine mark is found at Ser319 and Ser330. At Thr331 the chain carries Phosphothreonine. Residue Ser333 is modified to Phosphoserine. A phosphothreonine mark is found at Thr336 and Thr337. Phosphoserine occurs at positions 404, 490, and 494.

The protein belongs to the protein kinase superfamily. CAMK Ser/Thr protein kinase family. CaMK subfamily. CAMK2 is composed of 4 different chains: alpha (CAMK2A), beta (CAMK2B), gamma (CAMK2G), and delta (CAMK2D). The different isoforms assemble into homo- or heteromultimeric holoenzymes composed of 12 subunits with two hexameric rings stacked one on top of the other. Interacts with RRAD CACNB2. Autophosphorylation of Thr-287 following activation by Ca(2+)/calmodulin. Phosphorylation of Thr-287 locks the kinase into an activated state.

The protein resides in the cell membrane. The protein localises to the sarcolemma. It is found in the sarcoplasmic reticulum membrane. It catalyses the reaction L-seryl-[protein] + ATP = O-phospho-L-seryl-[protein] + ADP + H(+). It carries out the reaction L-threonyl-[protein] + ATP = O-phospho-L-threonyl-[protein] + ADP + H(+). Activated by Ca(2+)/calmodulin. Binding of calmodulin results in conformational change that relieves intrasteric autoinhibition and allows autophosphorylation of Thr-287 which turns the kinase in a constitutively active form and confers to the kinase a Ca(2+)-independent activity. In terms of biological role, calcium/calmodulin-dependent protein kinase involved in the regulation of Ca(2+) homeostatis and excitation-contraction coupling (ECC) in heart by targeting ion channels, transporters and accessory proteins involved in Ca(2+) influx into the myocyte, Ca(2+) release from the sarcoplasmic reticulum (SR), SR Ca(2+) uptake and Na(+) and K(+) channel transport. Targets also transcription factors and signaling molecules to regulate heart function. In its activated form, is involved in the pathogenesis of dilated cardiomyopathy and heart failure. Contributes to cardiac decompensation and heart failure by regulating SR Ca(2+) release via direct phosphorylation of RYR2 Ca(2+) channel on 'Ser-2808'. In the nucleus, phosphorylates the MEF2 repressor HDAC4, promoting its nuclear export and binding to 14-3-3 protein, and expression of MEF2 and genes involved in the hypertrophic program. Is essential for left ventricular remodeling responses to myocardial infarction. In pathological myocardial remodeling acts downstream of the beta adrenergic receptor signaling cascade to regulate key proteins involved in ECC. Regulates Ca(2+) influx to myocytes by binding and phosphorylating the L-type Ca(2+) channel subunit beta-2 CACNB2. In addition to Ca(2+) channels, can target and regulate the cardiac sarcolemmal Na(+) channel Nav1.5/SCN5A and the K+ channel Kv4.3/KCND3, which contribute to arrhythmogenesis in heart failure. Phosphorylates phospholamban (PLN/PLB), an endogenous inhibitor of SERCA2A/ATP2A2, contributing to the enhancement of SR Ca(2+) uptake that may be important in frequency-dependent acceleration of relaxation (FDAR) and maintenance of contractile function during acidosis. May participate in the modulation of skeletal muscle function in response to exercise, by regulating SR Ca(2+) transport through phosphorylation of PLN/PLB and triadin, a ryanodine receptor-coupling factor. In response to interferon-gamma (IFN-gamma) stimulation, catalyzes phosphorylation of STAT1, stimulating the JAK-STAT signaling pathway. This is Calcium/calmodulin-dependent protein kinase type II subunit delta (CAMK2D) from Sus scrofa (Pig).